A 650-amino-acid chain; its full sequence is 1-deoxy-D-xylulose-5-phosphate synthase 2 (650 aa).

Thiamine diphosphate contacts are provided by residues His-79 and 120-122 (AHS). Residue Asp-151 participates in Mg(2+) binding. Residues 152-153 (GS), Asn-180, Tyr-289, and Glu-371 contribute to the thiamine diphosphate site. Asn-180 is a binding site for Mg(2+).

It belongs to the transketolase family. DXPS subfamily. As to quaternary structure, homodimer. Mg(2+) is required as a cofactor. Requires thiamine diphosphate as cofactor.

The enzyme catalyses D-glyceraldehyde 3-phosphate + pyruvate + H(+) = 1-deoxy-D-xylulose 5-phosphate + CO2. It participates in metabolic intermediate biosynthesis; 1-deoxy-D-xylulose 5-phosphate biosynthesis; 1-deoxy-D-xylulose 5-phosphate from D-glyceraldehyde 3-phosphate and pyruvate: step 1/1. In terms of biological role, catalyzes the acyloin condensation reaction between C atoms 2 and 3 of pyruvate and glyceraldehyde 3-phosphate to yield 1-deoxy-D-xylulose-5-phosphate (DXP). In Zymomonas mobilis subsp. mobilis (strain ATCC 31821 / ZM4 / CP4), this protein is 1-deoxy-D-xylulose-5-phosphate synthase 2.